A 67-amino-acid chain; its full sequence is DNA-directed RNA polymerases I, II, and III subunit RPABC5 (67 aa).

The Zn(2+) site is built by Cys7, Cys10, Cys44, and Cys45.

This sequence belongs to the archaeal Rpo10/eukaryotic RPB10 RNA polymerase subunit family. Component of the RNA polymerase I (Pol I), RNA polymerase II (Pol II) and RNA polymerase III (Pol III) complexes consisting of at least 13, 12 and 17 subunits, respectively.

It localises to the nucleus. Its function is as follows. DNA-dependent RNA polymerase catalyzes the transcription of DNA into RNA using the four ribonucleoside triphosphates as substrates. Common component of RNA polymerases I, II and III which synthesize ribosomal RNA precursors, mRNA precursors and many functional non-coding RNAs, and a small RNAs, such as 5S rRNA and tRNAs, respectively. Pol II is the central component of the basal RNA polymerase II transcription machinery. Pols are composed of mobile elements that move relative to each other. In Pol II, Polr2L is part of the core element with the central large cleft. In Drosophila melanogaster (Fruit fly), this protein is DNA-directed RNA polymerases I, II, and III subunit RPABC5.